The primary structure comprises 297 residues: Ribonuclease H2 subunit A (297 aa).

Residues 21-248 (PCVLGIDEAG…ASTIVEKRCV (228 aa)) form the RNase H type-2 domain. D27, E28, and D138 together coordinate a divalent metal cation.

The protein belongs to the RNase HII family. Eukaryotic subfamily. It depends on Mn(2+) as a cofactor. Requires Mg(2+) as cofactor.

The enzyme catalyses Endonucleolytic cleavage to 5'-phosphomonoester.. Functionally, catalytic subunit of RNase HII, an endonuclease that specifically degrades the RNA of RNA:DNA hybrids. Participates in DNA replication, possibly by mediating the removal of lagging-strand Okazaki fragment RNA primers during DNA replication. Mediates the excision of single ribonucleotides from DNA:RNA duplexes. The sequence is that of Ribonuclease H2 subunit A (rnh-2) from Caenorhabditis elegans.